Consider the following 4391-residue polypeptide: Basement membrane-specific heparan sulfate proteoglycan core protein (4391 aa).

Positions 1–21 (MGWRAAGALLLALLLHGRLLA) are cleaved as a signal peptide. Thr42 carries an O-linked (GalNAc...) threonine glycan. O-linked (Xyl...) (heparan sulfate) serine glycans are attached at residues Ser65, Ser71, and Ser76. The region spanning 80-191 (QMVYFRALVN…QGFQFRRLGT (112 aa)) is the SEA domain. N-linked (GlcNAc...) asparagine glycosylation is present at Asn89. 4 consecutive LDL-receptor class A domains span residues 198 to 235 (ACTE…LNCE), 284 to 320 (PCGP…LDCG), 324 to 360 (PCEP…ANCP), and 367 to 404 (VCGP…FGCM). Cystine bridges form between Cys199/Cys212, Cys206/Cys225, Cys219/Cys234, Cys285/Cys297, Cys292/Cys310, Cys304/Cys319, Cys325/Cys337, Cys332/Cys350, Cys344/Cys359, Cys368/Cys381, Cys375/Cys394, and Cys388/Cys403. The Ig-like C2-type 1 domain maps to 405 to 504 (PPQVVTPPRE…VLELVPQRGP (100 aa)). The Laminin EGF-like 1; first part domain occupies 521 to 530 (CFCFGITSVC). One can recognise a Laminin IV type A 1 domain in the interval 538-730 (DQIRLRFDQP…SHGRAHSVEE (193 aa)). Asn554 carries an N-linked (GlcNAc...) asparagine glycan. The Laminin EGF-like 1; second part domain maps to 731–763 (CRCPIGYSGLSCESCDAHFTRVPGGPYLGTCSG). 11 cysteine pairs are disulfide-bonded: Cys764/Cys773, Cys766/Cys780, Cys783/Cys792, Cys795/Cys811, Cys814/Cys829, Cys816/Cys839, Cys842/Cys851, Cys854/Cys869, Cys879/Cys892, Cys894/Cys903, and Cys906/Cys921. Laminin EGF-like domains lie at 764 to 813 (CNCN…SCRP) and 814 to 871 (CPCP…KCRP). The region spanning 879-923 (CDERGSMGTSGEACRCKNNVVGRLCNECADGSFHLSTRNPDGCLK) is the Laminin EGF-like 4; truncated domain. Residues 924-933 (CFCMGVSRHC) form the Laminin EGF-like 5; first part domain. Residues 941 to 1125 (AQLHGASEEP…GQDPALEVEQ (185 aa)) enclose the Laminin IV type A 2 domain. One can recognise a Laminin EGF-like 5; second part domain in the interval 1126–1158 (CSCPPGYRGPSCQDCDTGYTRTPSGLYLGTCER). 12 cysteine pairs are disulfide-bonded: Cys1159-Cys1168, Cys1161-Cys1175, Cys1178-Cys1187, Cys1190-Cys1206, Cys1209-Cys1224, Cys1211-Cys1234, Cys1237-Cys1246, Cys1249-Cys1263, Cys1275-Cys1287, Cys1277-Cys1293, Cys1295-Cys1304, and Cys1307-Cys1322. Laminin EGF-like domains lie at 1159-1208 (CSCH…DCQL), 1209-1265 (CPCY…PCQR), and 1275-1324 (CNCD…GCLP). One can recognise a Laminin EGF-like 9; first part domain in the interval 1325–1334 (CFCMGITQQC). The Laminin IV type A 3 domain maps to 1344-1529 (ISTHFAPGDF…NRPRALEVEE (186 aa)). The Laminin EGF-like 9; second part domain maps to 1530–1562 (CRCPPGYIGLSCQDCAPGYTRTGSGLYLGHCEL). 8 disulfide bridges follow: Cys1563–Cys1572, Cys1565–Cys1579, Cys1582–Cys1591, Cys1594–Cys1610, Cys1613–Cys1628, Cys1615–Cys1638, Cys1641–Cys1650, and Cys1653–Cys1668. 2 Laminin EGF-like domains span residues 1563 to 1612 (CECN…DCQP) and 1613 to 1670 (CACP…QCLP). Ig-like C2-type domains lie at 1677-1771 (LVVE…SKPI), 1772-1865 (TVTV…TLSA), 1866-1955 (PVVS…GGGG), 1956-2051 (PRVQ…ASPP), 2052-2151 (PVKI…PGST), 2152-2244 (RPIR…PGPI), 2245-2340 (PPVR…AGST), 2341-2436 (QPIR…LGVT), 2437-2533 (PTVR…QGVA), 2534-2629 (YPVR…PSVS), 2630-2726 (PPIR…PGSS), 2727-2826 (MPIR…PGGA), 2827-2924 (PPIR…PGLA), 2925-3021 (QPIY…RLRS), 3022-3112 (PVIS…HGPP), 3113-3211 (TVSV…APGA), 3212-3298 (PQVQ…VESP), 3299-3399 (PYAT…AGST), 3400-3488 (PTVQ…ALPS), 3489-3574 (VLIN…LVQA), and 3575-3662 (LPQI…PERV). Residue Asn1755 is glycosylated (N-linked (GlcNAc...) asparagine). A glycan (N-linked (GlcNAc...) asparagine) is linked at Asn2121. Positions 2994–3014 (ASGPGPEQEASFTVTVPPSEG) are disordered. An O-linked (Xyl...) (chondroitin sulfate) serine glycan is attached at Ser2995. Positions 3003–3014 (ASFTVTVPPSEG) are enriched in polar residues. N-linked (GlcNAc...) asparagine glycosylation is found at Asn3072 and Asn3105. An N-linked (GlcNAc...) asparagine glycan is attached at Asn3279. The 181-residue stretch at 3663–3843 (VPYFTQTPYS…DLNLTAHGIS (181 aa)) folds into the Laminin G-like 1 domain. Asn3780 and Asn3836 each carry an N-linked (GlcNAc...) asparagine glycan. Intrachain disulfides connect Cys3819-Cys3845, Cys3848-Cys3859, Cys3853-Cys3869, Cys3871-Cys3880, Cys3888-Cys3899, Cys3893-Cys3910, and Cys3912-Cys3921. EGF-like domains lie at 3844-3881 (HCPT…SRCE) and 3884-3922 (QALH…LRCE). The region spanning 3928 to 4103 (TTPSLSGAGS…LGSQGIGQCY (176 aa)) is the Laminin G-like 2 domain. An O-linked (Xyl...) (chondroitin sulfate) serine glycan is attached at Ser3933. Asn4068 is a glycosylation site (N-linked (GlcNAc...) asparagine). 7 disulfides stabilise this stretch: Cys4076/Cys4102, Cys4108/Cys4119, Cys4113/Cys4129, Cys4131/Cys4140, Cys4147/Cys4159, Cys4153/Cys4164, and Cys4166/Cys4175. EGF-like domains are found at residues 4104 to 4141 (DSSP…DLCE) and 4143 to 4176 (EENP…PRCQ). The mediates motor neuron attachment stretch occupies residues 4149-4151 (LRE). Ser4179 and Ser4193 each carry an O-linked (Xyl...) (chondroitin sulfate) serine glycan. Positions 4201-4389 (QYGAYFHDDG…AQAGANTRPC (189 aa)) constitute a Laminin G-like 3 domain. The Ca(2+) site is built by Asp4258 and Leu4275. Positions 4299–4301 (LRE) are mediates motor neuron attachment. Residues Ala4325 and Asn4327 each coordinate Ca(2+). Cys4355 and Cys4389 are oxidised to a cystine. Residues 4364 to 4391 (ARPGAPPPQPLDLQHRAQAGANTRPCPS) are disordered.

In terms of assembly, has a strong tendency to aggregate in dimers or stellate structures. Interacts with other basement membrane components such as laminin, prolargin and collagen type IV. Interacts with COL13A1. Interacts with FGFBP1. Interacts with VWA1. Interacts (via C-terminus) with ECM1 (via C-terminus). Interacts with SVEP1. In terms of processing, proteolytic processing produces the C-terminal angiogenic peptide, endorepellin. This peptide can be further processed to produce the LG3 peptide. Post-translationally, O-glycosylated with core 1 or possibly core 8 glycans. Contains three heparan sulfate chains. Also contains chondroitin sulfate. In terms of tissue distribution, detected in cerebrospinal fluid, fibroblasts and urine (at protein level).

It localises to the secreted. The protein localises to the extracellular space. The protein resides in the extracellular matrix. Its subcellular location is the basement membrane. Its function is as follows. Integral component of basement membranes. Component of the glomerular basement membrane (GBM), responsible for the fixed negative electrostatic membrane charge, and which provides a barrier which is both size- and charge-selective. It serves as an attachment substrate for cells. Plays essential roles in vascularization. Critical for normal heart development and for regulating the vascular response to injury. Also required for avascular cartilage development. Functionally, anti-angiogenic and anti-tumor peptide that inhibits endothelial cell migration, collagen-induced endothelial tube morphogenesis and blood vessel growth in the chorioallantoic membrane. Blocks endothelial cell adhesion to fibronectin and type I collagen. Anti-tumor agent in neovascularization. Interaction with its ligand, integrin alpha2/beta1, is required for the anti-angiogenic properties. Evokes a reduction in phosphorylation of receptor tyrosine kinases via alpha2/beta1 integrin-mediated activation of the tyrosine phosphatase, PTPN6. Has anti-angiogenic properties that require binding of calcium ions for full activity. The sequence is that of Basement membrane-specific heparan sulfate proteoglycan core protein (HSPG2) from Homo sapiens (Human).